A 485-amino-acid chain; its full sequence is MDILKSYHLLAAAYSAPAWASFMAGAFLVLTLSLSLFLVFDHLSTYKNPEEQKFLIGVILMVPCYSIESFASLVKPSISVDCGILRDCYESFAMYCFGRYLVACIGGEERTIEFMERQGRKSFKTPLLDHKDEKGIIKHPFPMNLFLKPWRLSPWFYQVVKFGIVQYMIIKSLTALTALILEAFGVYCEGEFKWGCGYPYLAVVLNFSQSWALYCLVQFYGATKDELAHIQPLAKFLTFKSIVFLTWWQGVAIALLSSLGLFKSSIAQSLQLKTSVQDFIICIEMGIASVVHLYVFPAKPYGLMGDRFTGSVSVLGDYASVDCPIDPDEIRDSERPTKVRLPHPDVDIRSGMTIKESMRDVFVGGGEYIVKDVRFTVTQAVEPMEKSITKFNEKLHKISQNIKKHDKEKRRVKDDSCMSSSPSRRVIRGIDDPLLNGSFSDSGVTRTKKHRRKSGYTSAESGGESSSDQAYGGFEVRGRRWITKD.

Topologically, residues 1 to 19 are cytoplasmic; that stretch reads MDILKSYHLLAAAYSAPAW. The chain crosses the membrane as a helical span at residues 20 to 40; the sequence is ASFMAGAFLVLTLSLSLFLVF. At 41–53 the chain is on the lumenal side; it reads DHLSTYKNPEEQK. A helical membrane pass occupies residues 54 to 74; that stretch reads FLIGVILMVPCYSIESFASLV. Residues 75–167 are Cytoplasmic-facing; it reads KPSISVDCGI…QVVKFGIVQY (93 aa). Residues 168–188 form a helical membrane-spanning segment; that stretch reads MIIKSLTALTALILEAFGVYC. Over 189 to 196 the chain is Lumenal; it reads EGEFKWGC. The helical transmembrane segment at 197–217 threads the bilayer; the sequence is GYPYLAVVLNFSQSWALYCLV. Topologically, residues 218-241 are cytoplasmic; sequence QFYGATKDELAHIQPLAKFLTFKS. A helical membrane pass occupies residues 242–262; sequence IVFLTWWQGVAIALLSSLGLF. Over 263 to 277 the chain is Lumenal; it reads KSSIAQSLQLKTSVQ. A helical membrane pass occupies residues 278 to 298; it reads DFIICIEMGIASVVHLYVFPA. Topologically, residues 299 to 485 are cytoplasmic; that stretch reads KPYGLMGDRF…VRGRRWITKD (187 aa). Residues 384–415 are a coiled coil; the sequence is MEKSITKFNEKLHKISQNIKKHDKEKRRVKDD. The segment at 400–485 is disordered; sequence QNIKKHDKEK…VRGRRWITKD (86 aa). Residues 403–416 are compositionally biased toward basic and acidic residues; the sequence is KKHDKEKRRVKDDS. The segment covering 455–469 has biased composition (polar residues); it reads GYTSAESGGESSSDQ. Residues 476-485 are compositionally biased toward basic and acidic residues; that stretch reads VRGRRWITKD.

Belongs to the TMEM184 family.

It localises to the endomembrane system. It is found in the cell membrane. The protein resides in the cytoplasm. The protein localises to the cytosol. Functionally, required for programmed cell death (PCD) associated with hypersensitive response (HR). Involved both in the induction of EDS1/PAD4 mediated HR and in accelerated cell death in the acd11 mutant. Not required for HR induction elicited through pathways exclusively dependent on CC-NB-LRR resistance proteins. The protein is Protein LAZ1 of Arabidopsis thaliana (Mouse-ear cress).